The chain runs to 330 residues: GTP 3',8-cyclase (330 aa).

Positions 9–225 constitute a Radical SAM core domain; the sequence is RFGRTVNYVR…IRRHHELIPA (217 aa). A GTP-binding site is contributed by R18. The [4Fe-4S] cluster site is built by C25 and C29. Y31 serves as a coordination point for S-adenosyl-L-methionine. C32 provides a ligand contact to [4Fe-4S] cluster. R67 is a GTP binding site. Residue G71 participates in S-adenosyl-L-methionine binding. A GTP-binding site is contributed by T97. S121 serves as a coordination point for S-adenosyl-L-methionine. K158 is a GTP binding site. S-adenosyl-L-methionine is bound at residue M192. C256 and C259 together coordinate [4Fe-4S] cluster. 261-263 provides a ligand contact to GTP; that stretch reads RVR. A [4Fe-4S] cluster-binding site is contributed by C273.

This sequence belongs to the radical SAM superfamily. MoaA family. As to quaternary structure, monomer and homodimer. The cofactor is [4Fe-4S] cluster.

The catalysed reaction is GTP + AH2 + S-adenosyl-L-methionine = (8S)-3',8-cyclo-7,8-dihydroguanosine 5'-triphosphate + 5'-deoxyadenosine + L-methionine + A + H(+). Its pathway is cofactor biosynthesis; molybdopterin biosynthesis. Catalyzes the cyclization of GTP to (8S)-3',8-cyclo-7,8-dihydroguanosine 5'-triphosphate. The polypeptide is GTP 3',8-cyclase (Marinobacter nauticus (strain ATCC 700491 / DSM 11845 / VT8) (Marinobacter aquaeolei)).